Here is an 892-residue protein sequence, read N- to C-terminus: Major core protein OPG136 precursor (892 aa).

A propeptide spanning residues 616–698 is cleaved from the precursor; the sequence is SPEGEETIIC…ILDRIITNAG (83 aa).

This sequence belongs to the orthopxvirus protein OPG136 family. As to quaternary structure, interacts with P39/A4. The precursor is cleaved by OPG083 to give rise to the 62 kDa mature protein during virion maturation. Proteolytic cleavage of major core proteins OPG136, OPG129, and OPG098, which occurs at a late stage of core formation, is required for production of infectious mature virions (MV).

The protein resides in the virion. Core protein 4a is the most abundant virion protein. Major component of the virion core that undergoes proteolytic processing during the immature virion (IV) to mature virion (MV) transition. In Homo sapiens (Human), this protein is Major core protein OPG136 precursor (OPG136).